Here is a 484-residue protein sequence, read N- to C-terminus: MALKSKPGIMNITPGSKISVIRSKRVIQANTISSCDIIISDGKISSVLAWGKHVTSGAKLLDVGDLVVMAGIIDPHVHVNEPGRTDWEGYRTATLAAAAGGITAIVDMPLNSLPPTTSVTNFHTKLQAAKRQCYVDVAFWGGVIPDNQVELIPMLQAGVAGFKCFLINSGVPEFPHVSVTDLHTAMSELQGTNSVLLFHAELEIAKPAPEIGDSTLYQTFLDSRPDDMEIAAVQLVADLCQQYKVRCHIVHLSSAQSLTIIRKAKEAGAPLTVETTHHYLSLSSEHIPPGATYFKCCPPVRGHRNKEALWNALLQGHIDMVVSDHSPCTPDLKLLKEGDYMKAWGGISSLQFGLPLFWTSARTRGFSLTDVSQLLSSNTAKLCGLGIVKEPLKWVMMLIWSSGILTKSFRCKKMIFITRISSPHIWDSFFKEKSWLLLFEGLLFISKGSMLPNQLENLFLYTLWSLVKPVHPVHPIIRKNLPHI.

Zn(2+)-binding residues include H76, H78, K163, H199, H251, and D324. K163 carries the N6-carboxylysine modification.

It belongs to the metallo-dependent hydrolases superfamily. Allantoinase family. Homotetramer. Zn(2+) serves as cofactor. In terms of processing, carboxylation allows a single lysine to coordinate two zinc ions. In terms of tissue distribution, liver and kidney.

It localises to the mitochondrion. It carries out the reaction (S)-allantoin + H2O = allantoate + H(+). The protein operates within nitrogen metabolism; (S)-allantoin degradation; allantoate from (S)-allantoin: step 1/1. The protein is Allantoinase, mitochondrial (ALN) of Aquarana catesbeiana (American bullfrog).